Consider the following 588-residue polypeptide: Arylsulfatase L (588 aa).

The N-terminal stretch at 1–31 (MLHLHHSWLCFRSWLAGMLSVLLGLVPSASS) is a signal peptide. Asn-32 carries an N-linked (GlcNAc...) asparagine glycan. Asp-46 and Asp-47 together coordinate Ca(2+). Asn-58 carries an N-linked (GlcNAc...) asparagine glycan. A Ca(2+)-binding site is contributed by Cys-86. Catalysis depends on Cys-86, which acts as the Nucleophile. At Cys-86 the chain carries 3-oxoalanine (Cys). Asn-125 carries an N-linked (GlcNAc...) asparagine glycan. Lys-145 contributes to the substrate binding site. His-147 is an active-site residue. The N-linked (GlcNAc...) asparagine glycan is linked to Asn-258. His-301 provides a ligand contact to substrate. N-linked (GlcNAc...) asparagine glycosylation is present at Asn-344. The Ca(2+) site is built by Asp-353 and His-354. Lys-378 provides a ligand contact to substrate.

This sequence belongs to the sulfatase family. It depends on Ca(2+) as a cofactor. The conversion to 3-oxoalanine (also known as C-formylglycine, FGly), of a serine or cysteine residue in prokaryotes and of a cysteine residue in eukaryotes, is critical for catalytic activity.

It is found in the golgi apparatus. The protein resides in the golgi stack. The enzyme catalyses an aryl sulfate + H2O = a phenol + sulfate + H(+). Functionally, exhibits arylsulfatase activity towards the artificial substrate 4-methylumbelliferyl sulfate. May be essential for the correct composition of cartilage and bone matrix during development. Has no activity toward steroid sulfates. This chain is Arylsulfatase L (ARSL), found in Macaca fascicularis (Crab-eating macaque).